A 121-amino-acid polypeptide reads, in one-letter code: Large ribosomal subunit protein uL18 (121 aa).

It belongs to the universal ribosomal protein uL18 family. In terms of assembly, part of the 50S ribosomal subunit; part of the 5S rRNA/L5/L18/L25 subcomplex. Contacts the 5S and 23S rRNAs.

Functionally, this is one of the proteins that bind and probably mediate the attachment of the 5S RNA into the large ribosomal subunit, where it forms part of the central protuberance. The protein is Large ribosomal subunit protein uL18 of Acidovorax ebreus (strain TPSY) (Diaphorobacter sp. (strain TPSY)).